The sequence spans 336 residues: Phospho-N-acetylmuramoyl-pentapeptide-transferase (336 aa).

Helical transmembrane passes span 3 to 23 (LTLIAAIISFMVSAFTMPYFI), 53 to 73 (GGTVFLLVATAVSLLVNLFSI), 78 to 98 (SLALISGILSIVVIYGIIGFL), 118 to 138 (LALQLAGGLMFYFLHVSPSGI), 143 to 163 (VFGYQLSLGIFYLFFVLFWVV), 174 to 194 (GIDGLASISVVISLVTYGVIA), 200 to 220 (FDVLLLIGTMIGALLGFFCFN), 226 to 246 (VFMGDVGSLALGAMLAAISIA), 251 to 271 (WTLLIIGIVYVLETSSVMLQV), and 316 to 336 (AFLWGVGSLASLLVLAILYVF).

This sequence belongs to the glycosyltransferase 4 family. MraY subfamily. Mg(2+) is required as a cofactor.

Its subcellular location is the cell membrane. The enzyme catalyses UDP-N-acetyl-alpha-D-muramoyl-L-alanyl-gamma-D-glutamyl-L-lysyl-D-alanyl-D-alanine + di-trans,octa-cis-undecaprenyl phosphate = Mur2Ac(oyl-L-Ala-gamma-D-Glu-L-Lys-D-Ala-D-Ala)-di-trans,octa-cis-undecaprenyl diphosphate + UMP. It participates in cell wall biogenesis; peptidoglycan biosynthesis. In terms of biological role, catalyzes the initial step of the lipid cycle reactions in the biosynthesis of the cell wall peptidoglycan: transfers peptidoglycan precursor phospho-MurNAc-pentapeptide from UDP-MurNAc-pentapeptide onto the lipid carrier undecaprenyl phosphate, yielding undecaprenyl-pyrophosphoryl-MurNAc-pentapeptide, known as lipid I. This Streptococcus pyogenes serotype M5 (strain Manfredo) protein is Phospho-N-acetylmuramoyl-pentapeptide-transferase.